A 215-amino-acid polypeptide reads, in one-letter code: Urease accessory protein UreG 2 (215 aa).

Residue 11–18 (GPVGSGKT) coordinates GTP.

Belongs to the SIMIBI class G3E GTPase family. UreG subfamily. As to quaternary structure, homodimer. UreD, UreF and UreG form a complex that acts as a GTP-hydrolysis-dependent molecular chaperone, activating the urease apoprotein by helping to assemble the nickel containing metallocenter of UreC. The UreE protein probably delivers the nickel.

It localises to the cytoplasm. In terms of biological role, facilitates the functional incorporation of the urease nickel metallocenter. This process requires GTP hydrolysis, probably effectuated by UreG. This is Urease accessory protein UreG 2 from Methylorubrum extorquens (strain PA1) (Methylobacterium extorquens).